An 820-amino-acid polypeptide reads, in one-letter code: Leucine--tRNA ligase (820 aa).

The short motif at 42-52 (PYPSGDLHMGH) is the 'HIGH' region element. The 'KMSKS' region motif lies at 576–580 (KMSKS). Lys579 is a binding site for ATP.

Belongs to the class-I aminoacyl-tRNA synthetase family.

It localises to the cytoplasm. The catalysed reaction is tRNA(Leu) + L-leucine + ATP = L-leucyl-tRNA(Leu) + AMP + diphosphate. The chain is Leucine--tRNA ligase from Coxiella burnetii (strain RSA 331 / Henzerling II).